Here is a 220-residue protein sequence, read N- to C-terminus: MEHPVFKRDPSEKSETERREVPPLLKLALELGPLLVFFFANARGEMLIERFPILGSIGAPIFLATALFMAATVIALAISWSMTRTLPIMPLVSGIVVLVFGALTLWLHNDTFIKMKPTIVNTLFGGILLGGLFFGKSLLGYVFDSAFRLDAEGWRKLTLRWALFFIFLAIVNEIVWRNFSTDTWVSFKVWGIMPITIVFTLLQMPLIQKHSLTDEENTAS.

Transmembrane regions (helical) follow at residues 20-40 (EVPP…FFFA), 57-77 (IGAP…IALA), 86-106 (LPIM…LTLW), 123-143 (LFGG…GYVF), 156-176 (KLTL…EIVW), and 187-207 (FKVW…MPLI).

Belongs to the YciB family.

It localises to the cell inner membrane. Plays a role in cell envelope biogenesis, maintenance of cell envelope integrity and membrane homeostasis. The sequence is that of Inner membrane-spanning protein YciB from Brucella melitensis biotype 2 (strain ATCC 23457).